Consider the following 1619-residue polypeptide: Rap-GAP domain-containing protein DDB_G0281809 (1619 aa).

4 disordered regions span residues 128-249, 289-316, 907-974, and 1134-1153; these read SMSN…TTPI, QQQQQQSPSITTGTVKGSKYRESVMPGS, SIGG…PYIN, and ISNNNTTTTSNNSIKSTSNN. Composition is skewed to low complexity over residues 130-204 and 231-249; these read SNNN…SLSL and QISATTTAATSPTTPTTPI. Positions 265–295 form a coiled coil; that stretch reads FNEVVQQQQQQQQQQQQQQQQQQQQQQQQQS. Low complexity-rich tracts occupy residues 916–926 and 934–965; these read SGNSSQPSSTG and SGSKSNSSSSSSSQPSSTGGSGNNSNSANGGS. Residues 1273 to 1494 form the Rap-GAP domain; the sequence is LNMLDSVSER…TNRKKLISDI (222 aa). A disordered region spans residues 1554–1619; it reads IGTFTLPPPP…LSQSEDQSHK (66 aa). Residues 1559–1573 are compositionally biased toward pro residues; that stretch reads LPPPPISPTISPQPS. Residues 1574-1590 are compositionally biased toward low complexity; sequence PHLSSSGGSWASSKGGS. Residues 1591-1619 are compositionally biased toward polar residues; the sequence is TQPTTPSGRTSNFLSRRPNLSQSEDQSHK.

This Dictyostelium discoideum (Social amoeba) protein is Rap-GAP domain-containing protein DDB_G0281809.